The following is a 535-amino-acid chain: Large neutral amino acids transporter small subunit 2 (535 aa).

Positions 1 to 10 (MEKGARHRHN) are enriched in basic residues. Residues 1 to 30 (MEKGARHRHNTDKNHAGGSESEDFPEASSG) form a disordered region. The Cytoplasmic segment spans residues 1–44 (MEKGARHRHNTDKNHAGGSESEDFPEASSGGGGVALKKEIGLVS). A phosphoserine mark is found at Ser-19, Ser-28, and Ser-29. A helical membrane pass occupies residues 45–65 (ACGIIVGNIIGSGIFVSPKGV). Ile-53 serves as a coordination point for L-leucine. The Extracellular portion of the chain corresponds to 66 to 73 (LENAGSVG). A helical transmembrane segment spans residues 74–95 (LAVIVWIVTGLITAVGALCYAE). Residues 96–116 (LGVTIPKSGGDYSYVKDIFGG) are Cytoplasmic-facing. The helical transmembrane segment at 117 to 149 (LAGFLRLWIAVLVIYPTNQAVIALTFSNYVLQP) threads the bilayer. Residue Asn-134 coordinates L-tryptophan. Residues 150-157 (LFPTCFPP) lie on the Extracellular side of the membrane. Residues 158–178 (DSGLRLLAAICLLLLTWVNCS) form a helical membrane-spanning segment. The Cytoplasmic portion of the chain corresponds to 179–181 (SVR). The helical transmembrane segment at 182 to 210 (WATRVQDIFTAGKLLALALIIIMGVVQIC) threads the bilayer. The Extracellular segment spans residues 211-230 (KGEYFWLEPKNAFDNFQEPD). The chain crosses the membrane as a helical span at residues 231-252 (IGLIALAFLQGSFAYGGWNFLN). Gly-246 is an L-leucine binding site. Over 253–265 (YVTEELVDPYKNL) the chain is Cytoplasmic. Residues 266-287 (PRAIFISIPLVTFVYVFANVAY) traverse the membrane as a helical segment. Over 288-312 (ITAMSPQELLASNAVAVTFGEKLLG) the chain is Extracellular. A helical membrane pass occupies residues 313 to 338 (VMAWIMPISVALSTFGGVNGSLFTSS). At 339-364 (RLFFAGAREGHLPSVLAMIHVKRCTP) the chain is on the cytoplasmic side. The helical transmembrane segment at 365–382 (IPALLFTCLSTLLMLVTS) threads the bilayer. The Extracellular segment spans residues 383 to 386 (DMYT). A helical transmembrane segment spans residues 387-408 (LINYVGFINYLFYGVTVAGQIV). Position 395 (Asn-395) interacts with L-tryptophan. The Cytoplasmic portion of the chain corresponds to 409–423 (LRWKKPDIPRPIKIN). 2 helical membrane-spanning segments follow: residues 424-446 (LLFP…WSEP) and 447-466 (VVCG…YFLG). Over 467–535 (VYWQHKPKCF…DKDSLEQSQP (69 aa)) the chain is Cytoplasmic. The disordered stretch occupies residues 500-535 (GGSGTEGTREDMEEQQQPICQPSPGKDKDSLEQSQP). Over residues 524–535 (GKDKDSLEQSQP) the composition is skewed to basic and acidic residues. Ser-529 is modified (phosphoserine).

This sequence belongs to the amino acid-polyamine-organocation (APC) superfamily. L-type amino acid transporter (LAT) (TC 2.A.3.8) family. As to quaternary structure, disulfide-linked heterodimer composed of the catalytic light chain subunit SLC7A8 and the heavy chain subunit SLC3A2. SLC3A2 acts as a chaperone for correct plasma membrane trafficking and stabilization of SLC7A8 and modulates the substrate affinity and specificity of SLC7A8. ICAM-1 associates with the heterodimer SLC3A2/SLC7A8; facilitates leucine uptake. In terms of tissue distribution, mainly expressed in kidney and small intestine.

The protein resides in the cell membrane. The protein localises to the basolateral cell membrane. It carries out the reaction L-histidine(in) + L-phenylalanine(out) = L-histidine(out) + L-phenylalanine(in). The catalysed reaction is L-tryptophan(in) + L-phenylalanine(out) = L-tryptophan(out) + L-phenylalanine(in). The enzyme catalyses L-isoleucine(in) + L-phenylalanine(out) = L-isoleucine(out) + L-phenylalanine(in). It catalyses the reaction L-valine(in) + L-phenylalanine(out) = L-valine(out) + L-phenylalanine(in). It carries out the reaction L-leucine(in) + L-phenylalanine(out) = L-leucine(out) + L-phenylalanine(in). The catalysed reaction is L-glutamine(in) + L-phenylalanine(out) = L-glutamine(out) + L-phenylalanine(in). The enzyme catalyses L-cysteine(in) + L-phenylalanine(out) = L-cysteine(out) + L-phenylalanine(in). It catalyses the reaction L-phenylalanine(out) + L-methionine(in) = L-phenylalanine(in) + L-methionine(out). It carries out the reaction L-leucine(out) + L-methionine(in) = L-leucine(in) + L-methionine(out). The catalysed reaction is L-cysteine(out) + L-methionine(in) = L-cysteine(in) + L-methionine(out). The enzyme catalyses S-methylmercury-L-cysteine(out) + L-methionine(in) = S-methylmercury-L-cysteine(in) + L-methionine(out). It catalyses the reaction S-methylmercury-L-cysteine(in) + L-leucine(out) = S-methylmercury-L-cysteine(out) + L-leucine(in). It carries out the reaction S-methylmercury-L-cysteine(in) + L-phenylalanine(out) = S-methylmercury-L-cysteine(out) + L-phenylalanine(in). The catalysed reaction is L-phenylalanine(out) + L-serine(in) = L-phenylalanine(in) + L-serine(out). The enzyme catalyses L-phenylalanine(out) + glycine(in) = L-phenylalanine(in) + glycine(out). It catalyses the reaction L-phenylalanine(out) + L-alanine(in) = L-phenylalanine(in) + L-alanine(out). It carries out the reaction 3,3',5-triiodo-L-thyronine(out) = 3,3',5-triiodo-L-thyronine(in). The catalysed reaction is 3,3'-diiodo-L-thyronine(out) = 3,3'-diiodo-L-thyronine(in). The enzyme catalyses L-dopa(out) + L-phenylalanine(in) = L-dopa(in) + L-phenylalanine(out). With respect to regulation, the transporter activity is inhibited by 2-aminobicyclo-(2,2,1)heptane-2-carboxylic acid (BCH) (a specific inhibitor of system L transport). Associates with SLC3A2 to form a functional heterodimeric complex that translocates small and large neutral amino acids with broad specificity and a stoichiometry of 1:1. Functions as amino acid antiporter mediating the influx of extracellular essential amino acids mainly in exchange with the efflux of highly concentrated intracellular amino acids. Has relatively symmetrical selectivities but strongly asymmetrical substrate affinities at both the intracellular and extracellular sides of the transporter. This asymmetry allows SLC7A8 to regulate intracellular amino acid pools (mM concentrations) by exchange with external amino acids (uM concentration range), equilibrating the relative concentrations of different amino acids across the plasma membrane instead of mediating their net uptake. May play an essential role in the reabsorption of neutral amino acids from the epithelial cells to the bloodstream in the kidney. Involved in the uptake of methylmercury (MeHg) when administered as the L-cysteine or D,L-homocysteine complexes, and hence plays a role in metal ion homeostasis and toxicity. Involved in the cellular activity of small molecular weight nitrosothiols, via the stereoselective transport of L-nitrosocysteine (L-CNSO) across the transmembrane. Imports the thyroid hormone diiodothyronine (T2) and to a smaller extent triiodothyronine (T3) but not rT 3 or thyroxine (T4). Mediates the uptake of L-DOPA. May participate in auditory function. This chain is Large neutral amino acids transporter small subunit 2, found in Oryctolagus cuniculus (Rabbit).